The primary structure comprises 397 residues: MAKEKFDRSLPHVNVGTIGHVDHGKTTLTAALTRVCSEVFGSAVVEFDKIDSAPEEKARGITINTAHVEYNSNIRHYAHVDCPGHADYVKNMITGAAQMDGAILVCSAADGPMPQTREHILLSRQVGVPYIVVFLNKADLVDDAELLELVEMEVRDLLSTYDFPGDDTPIIIGSARMALEGKDDNEMGTTAVKKLVETLDAYIPEPVRAIDQPFLMPIEDVFSISGRGTVVTGRIERGIVRVQDPLEIVGLRDTTTTTCTGVEMFRKLLDEGRAGENCGVLLRGTKRDDVERGQVLVKPGSVKPHTKFTAEVYVLSKEEGGRHTPFFKGYRPQFYFRTTDVTGNCELPEGVEMVMPGDNIQMTVTLIKTIAMEDGLRFAIREGGRTVGAGVVAKIIE.

Positions 10-207 constitute a tr-type G domain; it reads LPHVNVGTIG…TLDAYIPEPV (198 aa). A G1 region spans residues 19–26; it reads GHVDHGKT. Position 19–26 (19–26) interacts with GTP; that stretch reads GHVDHGKT. T26 is a binding site for Mg(2+). The tract at residues 60–64 is G2; sequence GITIN. The interval 81 to 84 is G3; that stretch reads DCPG. GTP is bound by residues 81 to 85 and 136 to 139; these read DCPGH and NKAD. A G4 region spans residues 136–139; it reads NKAD. The G5 stretch occupies residues 174–176; that stretch reads SAR.

The protein belongs to the TRAFAC class translation factor GTPase superfamily. Classic translation factor GTPase family. EF-Tu/EF-1A subfamily. Monomer.

Its subcellular location is the cytoplasm. It catalyses the reaction GTP + H2O = GDP + phosphate + H(+). In terms of biological role, GTP hydrolase that promotes the GTP-dependent binding of aminoacyl-tRNA to the A-site of ribosomes during protein biosynthesis. This chain is Elongation factor Tu, found in Pseudomonas entomophila (strain L48).